The following is a 386-amino-acid chain: MDIVLEICDYYLFDKVYADVFPKDGAVHEFLKPAIQSFSQIDFPSLPNLDSFDTNSTLISSNNFNISNVNPATIPSYLFSKIASYQDKSEIYGLAPKFFPATDFINTSFLARSNIFRETLSLFIITTIFGWLLYFIVAYLSYVFVFDKKIFNHPRYLKNQMSLEIKRATTAIPVMVLLTIPFFLLELNGYSFLYLDINECTGGYKAILWQIPKFILFTDCGIYFLHRWLHWPSVYKVLHKPHHKWIVCTPFASHAFHPVDGFFQSLPYHLYPLLFPLHKVLYLFLFTFVNFWTVMIHDGSYWSNDPVVNGTACHTVHHLYFNYNYGQFTTLWDRLGNSYRRPDDSLFVKDAKAEEEKKIWKEQTRKMEEIRGEVEGKVDDREYVEQ.

Transmembrane regions (helical) follow at residues 120–140 (LSLFIITTIFGWLLYFIVAYL), 172–192 (IPVMVLLTIPFFLLELNGYSF), and 206–226 (AILWQIPKFILFTDCGIYFLH). Positions 214 to 337 (FILFTDCGIY…FTTLWDRLGN (124 aa)) constitute a Fatty acid hydroxylase domain. The short motif at 226 to 230 (HRWLH) is the Histidine box-1 element. The short motif at 239-243 (HKPHH) is the Histidine box-2 element. Residues 272 to 292 (PLLFPLHKVLYLFLFTFVNFW) form a helical membrane-spanning segment. The short motif at 314–318 (HTVHH) is the Histidine box-3 element.

The protein belongs to the sterol desaturase family. Fe cation serves as cofactor.

Its subcellular location is the endoplasmic reticulum membrane. The catalysed reaction is a Delta(7)-sterol + 2 Fe(II)-[cytochrome b5] + O2 + 2 H(+) = a Delta(5),Delta(7)-sterol + 2 Fe(III)-[cytochrome b5] + 2 H2O. The protein operates within steroid metabolism; ergosterol biosynthesis; ergosterol from zymosterol: step 3/5. In terms of biological role, C-5 sterol desaturase; part of the third module of ergosterol biosynthesis pathway that includes the late steps of the pathwa. ERG3 catalyzes the introduction of a C-5 double bond in the B ring to produce 5-dehydroepisterol. The third module or late pathway involves the ergosterol synthesis itself through consecutive reactions that mainly occur in the endoplasmic reticulum (ER) membrane. Firstly, the squalene synthase ERG9 catalyzes the condensation of 2 farnesyl pyrophosphate moieties to form squalene, which is the precursor of all steroids. Squalene synthase is crucial for balancing the incorporation of farnesyl diphosphate (FPP) into sterol and nonsterol isoprene synthesis. Secondly, the squalene epoxidase ERG1 catalyzes the stereospecific oxidation of squalene to (S)-2,3-epoxysqualene, which is considered to be a rate-limiting enzyme in steroid biosynthesis. Then, the lanosterol synthase ERG7 catalyzes the cyclization of (S)-2,3 oxidosqualene to lanosterol, a reaction that forms the sterol core. In the next steps, lanosterol is transformed to zymosterol through a complex process involving various demethylation, reduction and desaturation reactions. The lanosterol 14-alpha-demethylase ERG11 (also known as CYP51) catalyzes C14-demethylation of lanosterol to produce 4,4'-dimethyl cholesta-8,14,24-triene-3-beta-ol, which is critical for ergosterol biosynthesis. The C-14 reductase ERG24 reduces the C14=C15 double bond of 4,4-dimethyl-cholesta-8,14,24-trienol to produce 4,4-dimethyl-cholesta-8,24-dienol. 4,4-dimethyl-cholesta-8,24-dienol is substrate of the C-4 demethylation complex ERG25-ERG26-ERG27 in which ERG25 catalyzes the three-step monooxygenation required for the demethylation of 4,4-dimethyl and 4alpha-methylsterols, ERG26 catalyzes the oxidative decarboxylation that results in a reduction of the 3-beta-hydroxy group at the C-3 carbon to an oxo group, and ERG27 is responsible for the reduction of the keto group on the C-3. ERG28 has a role as a scaffold to help anchor ERG25, ERG26 and ERG27 to the endoplasmic reticulum and ERG29 regulates the activity of the iron-containing C4-methylsterol oxidase ERG25. Then, the sterol 24-C-methyltransferase ERG6 catalyzes the methyl transfer from S-adenosyl-methionine to the C-24 of zymosterol to form fecosterol. The C-8 sterol isomerase ERG2 catalyzes the reaction which results in unsaturation at C-7 in the B ring of sterols and thus converts fecosterol to episterol. The sterol-C5-desaturase ERG3 then catalyzes the introduction of a C-5 double bond in the B ring to produce 5-dehydroepisterol. The C-22 sterol desaturase ERG5 further converts 5-dehydroepisterol into ergosta-5,7,22,24(28)-tetraen-3beta-ol by forming the C-22(23) double bond in the sterol side chain. Finally, ergosta-5,7,22,24(28)-tetraen-3beta-ol is substrate of the C-24(28) sterol reductase ERG4 to produce ergosterol. This is Delta(7)-sterol 5(6)-desaturase ERG3 from Candida albicans (strain SC5314 / ATCC MYA-2876) (Yeast).